A 582-amino-acid chain; its full sequence is Potassium voltage-gated channel subfamily KQT member 1 (582 aa).

Residues 1 to 31 are Cytoplasmic-facing; it reads RVSIYSARRPLLARTHIQGRVYNFLERPTGW. The helical transmembrane segment at 32-53 threads the bilayer; the sequence is KCFVYHFAVFLIVLVCLIFSVL. Topologically, residues 54–64 are extracellular; that stretch reads STIEQYVALAT. Residues 65–87 form a helical membrane-spanning segment; sequence GTLFWMEIVLVVFFGTEYVVRLW. Residues 88–103 are Cytoplasmic-facing; the sequence is SAGCRSKYVGVWGRLR. The helical transmembrane segment at 104–129 threads the bilayer; sequence FARKPISIIDLIVVLASMVVLCVGSK. Over 130-137 the chain is Extracellular; it reads GQVFATSA. A helical; Voltage-sensor membrane pass occupies residues 138 to 153; sequence IRGIRFLQILRMLHVD. Residues 149 to 157 form an interaction with KCNE3 region; the sequence is MLHVDRQGG. Residues 154–171 lie on the Cytoplasmic side of the membrane; the sequence is RQGGTWRLLGSVVFIHRQ. Gln-155 contacts a 1,2-diacyl-sn-glycero-3-phospho-(1D-myo-inositol-4,5-bisphosphate). The helical transmembrane segment at 172-194 threads the bilayer; sequence ELITTLYIGFLGLIFSSYFVYLA. The Extracellular portion of the chain corresponds to 195-210; sequence EKDAVNESGQVEFGSY. An N-linked (GlcNAc...) asparagine glycan is attached at Asn-200. Residues 211–231 constitute an intramembrane region (pore-forming); the sequence is ADALWWGVVTVTTIGYGDKVP. Topologically, residues 232 to 233 are extracellular; the sequence is QT. The helical transmembrane segment at 234-259 threads the bilayer; that stretch reads WVGKTIASCFSVFAISFFALPAGILG. Residues 260–582 are Cytoplasmic-facing; the sequence is SGFALKVQQK…VPRRGPEEGS (323 aa). The tract at residues 281-293 is interaction with CALM; it reads AAASLIQTAWRCY. A phosphoserine mark is found at Ser-318 and Ser-320. The segment at 426–440 is interaction with CALM; calcium-dependent; that stretch reads KVIRRMQYFVAKKKF. The tract at residues 446-483 is interaction with KCNE1 C-terminus; that stretch reads PYDVRDVIEQYSQGHLNLMVRIKELQRRLDQSIGKPSL. Positions 496–532 form a coiled coil; it reads SNTIGARLNRVEDKVAQLDQRLVLITDMLQQLLSLHH. An interaction with AKAP9 region spans residues 499-527; that stretch reads IGARLNRVEDKVAQLDQRLVLITDMLQQL. A C-terminal assembly domain (tetramerization) region spans residues 500-531; sequence GARLNRVEDKVAQLDQRLVLITDMLQQLLSLH. The segment at 530 to 582 is disordered; it reads LHHGGPPGSRPPSGGGAQVQPCGPTNPELFLPGNALPTYEQLTVPRRGPEEGS.

This sequence belongs to the potassium channel family. KQT (TC 1.A.1.15) subfamily. Kv7.1/KCNQ1 sub-subfamily. Tetramer. Heterotetramer with KCNE1; targets to the membrane raft. Interacts (via C-terminus) with CALM; forms a heterooctameric structure (with 4:4 KCNQ1:CALM stoichiometry) in a calcium-independent manner. Interacts with AKAP9; targets protein kinase A (PKA) catalytic and regulatory subunits and protein phosphatase 1 (PP1) to the KCNQ1-KCNE1 complex, allowing PKA-mediated phosphorylation and increase of delayed rectifier potassium channel activity. Interacts with KCNE2; form a heterooligomer complex that targets to the membrane raft and leading to currents with an apparently instantaneous activation, a rapid deactivation process and a linear current-voltage relationship and decreases the amplitude of the outward current. Interacts with AP2M1; mediates estrogen-induced internalization via clathrin-coated vesicles. Interacts with NEDD4L; promotes internalization and decreases I(Ks) currents. Interacts with USP2; counteracts the NEDD4L-specific down-regulation of I(Ks) and restore plasma membrane localization. Heterotetramer with KCNQ5; has a voltage-gated potassium channel activity. Interacts with KCNE3; four KCNE3 molecules are bound to one KCNQ1 tetramer (4:4 KCNQ1:KCNE3 stoichiometry); alters membrane raft localization; affects KCNQ1 structure and gating properties. Interacts with KCNE4; impairs KCNQ1 localization in lipid rafts and inhibits voltage-gated potassium channel activity. Interacts with KCNE5; impairs KCNQ1 localization in lipid rafts and only conducts current upon strong and continued depolarization. Post-translationally, phosphorylated by PKA; increases delayed rectifier potassium channel activity of the KCNQ1-KCNE1 complex through a macromolecular complex that includes PKA, PP1, and the targeting protein AKAP9. Ubiquitinated by NEDD4L; promotes internalization. The ubiquitinylated form is internalized through a clathrin-mediated endocytosis by interacting with AP2M1 and is recycled back to the cell membrane via RAB4A and RAB11A. In terms of processing, deubiquitinated by USP2; counteracts the NEDD4L-specific down-regulation of I(Ks) and restores the membrane localization.

It localises to the cell membrane. The protein localises to the cytoplasmic vesicle membrane. It is found in the early endosome. Its subcellular location is the membrane raft. The protein resides in the endoplasmic reticulum. It localises to the basolateral cell membrane. It carries out the reaction K(+)(in) = K(+)(out). Its activity is regulated as follows. PIP2 molecule is essential to activate KCNQ channels by inducing the coupling of the voltage-sensing domain (VSD) and the pore-forming domain (PD). Upon channel activation, PIP2 disrupts the VSD-calmodulin/CALM interactions, causing the release of CALM from the VSD which triggers the opening of the gate. Calcium potentiates KCNQ1 channel current through calcium-bound CALM. Calcium-bound CALM competes with PIP2 to stabilize the channel open state. Pore-forming subunit of the voltage-gated potassium (Kv) channel involved in the regulation of cardiomyocyte excitability and important in normal development and functions of myocardium, inner ear, stomach and colon. Associates with KCNE beta subunits that modulates current kinetics. Induces a voltage-dependent by rapidly activating and slowly deactivating potassium-selective outward current. Also promotes a delayed voltage activated potassium current showing outward rectification characteristic. During beta-adrenergic receptor stimulation participates in cardiac repolarization by associating with KCNE1 to form the I(Ks) cardiac potassium current that increases the amplitude and slows down the activation kinetics of outward potassium current I(Ks). Muscarinic agonist oxotremorine-M strongly suppresses KCNQ1/KCNE1 current. When associated with KCNE3, forms the potassium channel that is important for cyclic AMP-stimulated intestinal secretion of chloride ions. This interaction with KCNE3 is reduced by 17beta-estradiol, resulting in the reduction of currents. During conditions of increased substrate load, maintains the driving force for proximal tubular and intestinal sodium ions absorption, gastric acid secretion, and cAMP-induced jejunal chloride ions secretion. Allows the provision of potassium ions to the luminal membrane of the secretory canaliculus in the resting state as well as during stimulated acid secretion. When associated with KCNE2, forms a heterooligomer complex leading to currents with an apparently instantaneous activation, a rapid deactivation process and a linear current-voltage relationship and decreases the amplitude of the outward current. When associated with KCNE4, inhibits voltage-gated potassium channel activity. When associated with KCNE5, this complex only conducts current upon strong and continued depolarization. Also forms a heterotetramer with KCNQ5 that has a voltage-gated potassium channel activity. Binds with phosphatidylinositol 4,5-bisphosphate. In Felis catus (Cat), this protein is Potassium voltage-gated channel subfamily KQT member 1.